Reading from the N-terminus, the 313-residue chain is Probable 5-dehydro-4-deoxyglucarate dehydratase (313 aa).

Belongs to the DapA family.

It catalyses the reaction 5-dehydro-4-deoxy-D-glucarate + H(+) = 2,5-dioxopentanoate + CO2 + H2O. It functions in the pathway carbohydrate acid metabolism; D-glucarate degradation; 2,5-dioxopentanoate from D-glucarate: step 2/2. The polypeptide is Probable 5-dehydro-4-deoxyglucarate dehydratase (Bradyrhizobium sp. (strain BTAi1 / ATCC BAA-1182)).